The chain runs to 483 residues: Aspartyl/glutamyl-tRNA(Asn/Gln) amidotransferase subunit B (483 aa).

This sequence belongs to the GatB/GatE family. GatB subfamily. Heterotrimer of A, B and C subunits.

It carries out the reaction L-glutamyl-tRNA(Gln) + L-glutamine + ATP + H2O = L-glutaminyl-tRNA(Gln) + L-glutamate + ADP + phosphate + H(+). The catalysed reaction is L-aspartyl-tRNA(Asn) + L-glutamine + ATP + H2O = L-asparaginyl-tRNA(Asn) + L-glutamate + ADP + phosphate + 2 H(+). Functionally, allows the formation of correctly charged Asn-tRNA(Asn) or Gln-tRNA(Gln) through the transamidation of misacylated Asp-tRNA(Asn) or Glu-tRNA(Gln) in organisms which lack either or both of asparaginyl-tRNA or glutaminyl-tRNA synthetases. The reaction takes place in the presence of glutamine and ATP through an activated phospho-Asp-tRNA(Asn) or phospho-Glu-tRNA(Gln). The sequence is that of Aspartyl/glutamyl-tRNA(Asn/Gln) amidotransferase subunit B from Marinobacter nauticus (strain ATCC 700491 / DSM 11845 / VT8) (Marinobacter aquaeolei).